Reading from the N-terminus, the 305-residue chain is Oxygen-dependent coproporphyrinogen-III oxidase (305 aa).

A substrate-binding site is contributed by Ser-94. The a divalent metal cation site is built by His-98 and His-108. The active-site Proton donor is the His-108. Position 110–112 (Asn-110–Arg-112) interacts with substrate. 2 residues coordinate a divalent metal cation: His-147 and His-177. Residues Tyr-242–Glu-277 are important for dimerization. Gly-260–Arg-262 lines the substrate pocket.

This sequence belongs to the aerobic coproporphyrinogen-III oxidase family. As to quaternary structure, homodimer. Requires a divalent metal cation as cofactor.

The protein localises to the cytoplasm. It catalyses the reaction coproporphyrinogen III + O2 + 2 H(+) = protoporphyrinogen IX + 2 CO2 + 2 H2O. The protein operates within porphyrin-containing compound metabolism; protoporphyrin-IX biosynthesis; protoporphyrinogen-IX from coproporphyrinogen-III (O2 route): step 1/1. Its function is as follows. Involved in the heme biosynthesis. Catalyzes the aerobic oxidative decarboxylation of propionate groups of rings A and B of coproporphyrinogen-III to yield the vinyl groups in protoporphyrinogen-IX. In Shewanella denitrificans (strain OS217 / ATCC BAA-1090 / DSM 15013), this protein is Oxygen-dependent coproporphyrinogen-III oxidase.